A 257-amino-acid chain; its full sequence is DNA repair protein RecO (257 aa).

It belongs to the RecO family.

Involved in DNA repair and RecF pathway recombination. The chain is DNA repair protein RecO from Clostridium kluyveri (strain ATCC 8527 / DSM 555 / NBRC 12016 / NCIMB 10680 / K1).